The sequence spans 547 residues: Undecaprenyl phosphate-alpha-4-amino-4-deoxy-L-arabinose arabinosyl transferase (547 aa).

Helical transmembrane passes span 83–103 (FASA…ALQL), 111–131 (FLAS…TYSV), 174–194 (FLTK…PYVI), 205–225 (FGPL…IAVH), 253–273 (APFW…LGLL), 286–306 (ISPE…FFSI), 311–331 (LLTY…ANAV), 346–366 (AWLN…LAFS), 378–398 (GALA…FIQL), and 408–428 (SALC…QSLI).

It belongs to the glycosyltransferase 83 family.

It is found in the cell inner membrane. The catalysed reaction is 4-amino-4-deoxy-alpha-L-arabinopyranosyl di-trans,octa-cis-undecaprenyl phosphate + lipid IVA = lipid IIA + di-trans,octa-cis-undecaprenyl phosphate.. It functions in the pathway lipopolysaccharide metabolism; 4-amino-4-deoxy-beta-L-arabinose-lipid A biosynthesis. Its function is as follows. Catalyzes the transfer of the L-Ara4N moiety of the glycolipid undecaprenyl phosphate-alpha-L-Ara4N to lipid A. The modified arabinose is attached to lipid A and is required for resistance to polymyxin and cationic antimicrobial peptides. In Aeromonas hydrophila subsp. hydrophila (strain ATCC 7966 / DSM 30187 / BCRC 13018 / CCUG 14551 / JCM 1027 / KCTC 2358 / NCIMB 9240 / NCTC 8049), this protein is Undecaprenyl phosphate-alpha-4-amino-4-deoxy-L-arabinose arabinosyl transferase.